The following is a 226-amino-acid chain: Ribosomal RNA small subunit methyltransferase G (226 aa).

S-adenosyl-L-methionine is bound by residues Gly-83, Phe-88, 136-137, and Arg-152; that span reads IE. The disordered stretch occupies residues 199-226; the sequence is FSPSQSDPEGSVLKVRGLHGPDGQPHRR.

Belongs to the methyltransferase superfamily. RNA methyltransferase RsmG family.

It localises to the cytoplasm. It catalyses the reaction guanosine(527) in 16S rRNA + S-adenosyl-L-methionine = N(7)-methylguanosine(527) in 16S rRNA + S-adenosyl-L-homocysteine. In terms of biological role, specifically methylates the N7 position of guanine in position 527 of 16S rRNA. The sequence is that of Ribosomal RNA small subunit methyltransferase G from Parvibaculum lavamentivorans (strain DS-1 / DSM 13023 / NCIMB 13966).